Consider the following 88-residue polypeptide: Protein A19 homolog (88 aa).

The interval 1 to 28 is disordered; it reads MADSTAGAKKRKKRSTSATSTRKEPPTV.

The protein belongs to the chordopoxvirinae A19 family.

In Fowlpox virus (strain NVSL) (FPV), this protein is Protein A19 homolog.